Reading from the N-terminus, the 135-residue chain is Small ribosomal subunit protein uS11 (135 aa).

This sequence belongs to the universal ribosomal protein uS11 family. As to quaternary structure, part of the 30S ribosomal subunit. Interacts with proteins S7 and S18. Binds to IF-3.

In terms of biological role, located on the platform of the 30S subunit, it bridges several disparate RNA helices of the 16S rRNA. Forms part of the Shine-Dalgarno cleft in the 70S ribosome. This Corynebacterium urealyticum (strain ATCC 43042 / DSM 7109) protein is Small ribosomal subunit protein uS11.